The following is a 434-amino-acid chain: MKLLVLGVNHETAPVDIREKVSFSPAQVQNALSELKSQGLANESVILSTCNRTEIYTTLKSQSPEKIRAWLHEYFELEEDSINSFLYEYADIEAIKHMMRVSSGLNSLVLGEPQILGQIKEAFHLAHKSDSVHQTLHALFQYIFKTAKQVRTDTAIGSSPVSVAFSAVALSKQFFGKLENQTALLLGAGETVELVARHLKESHIGNLIIANRTLSKAHQLTESLGGYAISLHEIDDHLHEADIVIASTASPTPILKTEMVANALKKRRNKPMFMIDIAVPRDIEPAIGNFSDTYLYTVDDLQEIIEENKRSRKDAALEAEEIVELQAENFMAQYQATQQISPIIQRYRQQAYTLKEHALQDALHHLENGGDPQELLTKLANQLTNKILHTPTTNLHHAGLNGQKEVIQAAEQILLTQQSDASDSSENENTHATS.

Substrate-binding positions include 49 to 52 (TCNR), serine 107, 112 to 114 (EPQ), and glutamine 118. The Nucleophile role is filled by cysteine 50. 187–192 (GAGETV) is a binding site for NADP(+).

This sequence belongs to the glutamyl-tRNA reductase family. As to quaternary structure, homodimer.

It catalyses the reaction (S)-4-amino-5-oxopentanoate + tRNA(Glu) + NADP(+) = L-glutamyl-tRNA(Glu) + NADPH + H(+). It participates in porphyrin-containing compound metabolism; protoporphyrin-IX biosynthesis; 5-aminolevulinate from L-glutamyl-tRNA(Glu): step 1/2. In terms of biological role, catalyzes the NADPH-dependent reduction of glutamyl-tRNA(Glu) to glutamate 1-semialdehyde (GSA). The chain is Glutamyl-tRNA reductase from Hydrogenovibrio crunogenus (strain DSM 25203 / XCL-2) (Thiomicrospira crunogena).